Reading from the N-terminus, the 64-residue chain is Small, acid-soluble spore protein beta (64 aa).

This sequence belongs to the alpha/beta-type SASP family.

SASP are bound to spore DNA. They are double-stranded DNA-binding proteins that cause DNA to change to an a-like conformation. They protect the DNA backbone from chemical and enzymatic cleavage and are thus involved in dormant spore's high resistance to UV light. This chain is Small, acid-soluble spore protein beta, found in Paraclostridium bifermentans (Clostridium bifermentans).